Consider the following 306-residue polypeptide: Ornithine carbamoyltransferase (306 aa).

Residues 46–49, Gln73, Arg97, and 124–127 each bind carbamoyl phosphate; these read STRT and HPTQ. Residues Asn156, Asp220, and 224-225 each bind L-ornithine; that span reads SM. Carbamoyl phosphate contacts are provided by residues 260–261 and Arg288; that span reads CL.

This sequence belongs to the aspartate/ornithine carbamoyltransferase superfamily. OTCase family.

The protein resides in the cytoplasm. It carries out the reaction carbamoyl phosphate + L-ornithine = L-citrulline + phosphate + H(+). The protein operates within amino-acid degradation; L-arginine degradation via ADI pathway; carbamoyl phosphate from L-arginine: step 2/2. Its function is as follows. Reversibly catalyzes the transfer of the carbamoyl group from carbamoyl phosphate (CP) to the N(epsilon) atom of ornithine (ORN) to produce L-citrulline. This chain is Ornithine carbamoyltransferase, found in Campylobacter jejuni subsp. jejuni serotype O:6 (strain 81116 / NCTC 11828).